Consider the following 148-residue polypeptide: MTKALLIYLVSSFLALNQASLISRCDLAQVLQLEDLDGFEGYSLSDWLCLAFVESKFNISKINENADGSFDYGLFQINSHYWCNDYKSYSENLCHVDCQDLLNPNLLAGIHCAKRIVSGARGMNNWVEWRLHCSGRPLFYWLTGCRLR.

The first 19 residues, 1–19, serve as a signal peptide directing secretion; sequence MTKALLIYLVSSFLALNQA. A C-type lysozyme domain is found at 20-148; the sequence is SLISRCDLAQ…FYWLTGCRLR (129 aa). 4 disulfides stabilise this stretch: cysteine 25/cysteine 145, cysteine 49/cysteine 133, cysteine 83/cysteine 98, and cysteine 94/cysteine 112. Active-site residues include glutamate 54 and aspartate 71.

This sequence belongs to the glycosyl hydrolase 22 family. As to quaternary structure, monomer. In terms of tissue distribution, expressed in testis, epididymis and spermatozoa (at protein level). Expressed in late-stage spermatocytes and round spermatids.

It is found in the secreted. It localises to the cell surface. Its subcellular location is the cell projection. The protein localises to the cilium. The protein resides in the flagellum. It carries out the reaction Hydrolysis of (1-&gt;4)-beta-linkages between N-acetylmuramic acid and N-acetyl-D-glucosamine residues in a peptidoglycan and between N-acetyl-D-glucosamine residues in chitodextrins.. Its function is as follows. May be involved sperm-egg plasma membrane adhesion and fusion during fertilization. Exhibits bacteriolytic activity in vitro against Micrococcus luteus and Staphylococcus aureus. Shows weak bacteriolytic activity against Gram-positive bacteria at physiological pH. Bacteriolytic activity is pH-dependent, with a maximum at around pH 5.6. This is Lysozyme-like protein 6 (LYZL6) from Homo sapiens (Human).